The chain runs to 320 residues: Aminoacyl tRNA synthase complex-interacting multifunctional protein 2 (320 aa).

Residues 31 to 51 (HSKTTSPATDAGHVQEPSEPS) form a disordered region. Ser36 bears the Phosphoserine mark. Positions 82 to 162 (TPDADLDVTN…HTHSSVKNVP (81 aa)) are interaction with PRKN. The interval 162–225 (PENLLKCFGE…FLFSLFGQKH (64 aa)) is interaction with TP53. Residues 220–317 (LFGQKHNAVH…NLAPFSTALQ (98 aa)) enclose the GST C-terminal domain.

Part of the multisynthetase complex (MSC), a multisubunit complex that groups tRNA ligases for Arg (RARS1), Asp (DARS1), Gln (QARS1), Ile (IARS1), Leu (LARS1), Lys (KARS1), Met (MARS1) the bifunctional ligase for Glu and Pro (EPRS1) and the auxiliary subunits AIMP1/p43, AIMP2/p38 and EEF1E1/p18. Interacts (via N-terminus) with KARS1. Interacts with EPRS1. Forms a linear complex that contains MARS1, EEF1E1, EPRS1 and AIMP2 that is at the core of the multisubunit complex. Binds FUBP1 (via C-terminus). Interacts in both its unphosphorylated and phosphorylated forms with p53/TP53 (via N-terminus) in the nucleus following UV irradiation. Interacts (via N-terminus) with PRKN/parkin (via first RING-type domain). Interacts with TARS3. In terms of processing, phosphorylated on serine residues in response to UV irradiation. Ubiquitinated by PRKN, leading to its degradation by the proteasome.

Its subcellular location is the cytoplasm. It localises to the cytosol. The protein resides in the nucleus. In terms of biological role, required for assembly and stability of the aminoacyl-tRNA synthase complex. Mediates ubiquitination and degradation of FUBP1, a transcriptional activator of MYC, leading to MYC down-regulation which is required for aveolar type II cell differentiation. Blocks MDM2-mediated ubiquitination and degradation of p53/TP53. Functions as a proapoptotic factor. The sequence is that of Aminoacyl tRNA synthase complex-interacting multifunctional protein 2 (Aimp2) from Rattus norvegicus (Rat).